The primary structure comprises 625 residues: MRDFDVIVVGGGHAGIEAAHASARMGCKTLLLTILVEQIGAASCNPAIGGLAKGHLVKEIDALGGVMGKVTDLCGLQFRTLNASKGPAVRGTRAQIDMDRYRIMMRNLCLTTPNLTVAQEMVEELIVEEGAVLGVRTQIGREYRSAKVIMTTGTFLNGLVHIGNRTSSNGRVGEPSSIKLSESLRSLGLEVGRLKTGTCARIASESIDFSVMEQHPGDLPPPPFSFSTKKEEFAPTQLPCYVTYTNEKTHEIIRSNFHRAPMFTGQIEGIGPRYCPSIEDKVNRFKERERHQIFVEPQTLEATEYYLNGLTTSMPFDVQEAMIRSMAGLQNARIVRYGYAIEYDYVNPVELKHTLETKKIKNLYLAGQINGTTGYEEAGAQGLAAGINAALSVKGEEPFVLRRDEAYLGVLIDDLVTKGTKEPYRMFTSRAEYRLLLREDNAEFRLLRHGARFGLVEEEALLALQKDEQSIHGGLVHLRESSATPSKETLAFLEEMGEEKINDKTTWLAIAGRKSFDEAKLRKISPLFEEMSERALGQVLIEAKYASYIQKQQESVGSMQEMLKVKIPEGFIFDTVPGLSLEVIEKLKRFNPPTLFAASEISGITPASLDVLHLYIHLRGKESVD.

Residues 10–15 (GGGHAG), Val122, and Ser177 contribute to the FAD site. Residue 271 to 285 (GPRYCPSIEDKVNRF) participates in NAD(+) binding. An FAD-binding site is contributed by Gln368.

Belongs to the MnmG family. In terms of assembly, homodimer. Heterotetramer of two MnmE and two MnmG subunits. The cofactor is FAD.

Its subcellular location is the cytoplasm. Functionally, NAD-binding protein involved in the addition of a carboxymethylaminomethyl (cmnm) group at the wobble position (U34) of certain tRNAs, forming tRNA-cmnm(5)s(2)U34. The chain is tRNA uridine 5-carboxymethylaminomethyl modification enzyme MnmG from Wolinella succinogenes (strain ATCC 29543 / DSM 1740 / CCUG 13145 / JCM 31913 / LMG 7466 / NCTC 11488 / FDC 602W) (Vibrio succinogenes).